Consider the following 858-residue polypeptide: Heat shock protein 105 kDa (858 aa).

Residue Ser2 is modified to N-acetylserine. Lys471 carries the post-translational modification N6-acetyllysine. Disordered regions lie at residues 500-585 (KVPT…PPEA) and 801-858 (VTQP…MDLD). Residues 504–515 (EEEDGSSVEADM) are compositionally biased toward acidic residues. 2 positions are modified to phosphoserine: Ser509 and Ser510. Residues 533-555 (QQDNSEAGTQPQVQTDGQQTSQS) are compositionally biased toward polar residues. Phosphoserine is present on Ser558. A Phosphothreonine modification is found at Thr562. 2 stretches are compositionally biased toward basic and acidic residues: residues 564-585 (EENK…PPEA) and 806-815 (PKIESPKLER). A Phosphoserine modification is found at Ser810. At Thr816 the chain carries Phosphothreonine.

The protein belongs to the heat shock protein 70 family. Interacts with HSPA8/HSC70. Interacts with HSPA1A (via NBD) and HSPA1B (via NBD). Phosphorylation on Ser-509 may be important for regulation of the HSPA8/HSC70 chaperone activity.

Its subcellular location is the cytoplasm. In terms of biological role, acts as a nucleotide-exchange factor (NEF) for chaperone proteins HSPA1A and HSPA1B, promoting the release of ADP from HSPA1A/B thereby triggering substrate release. Prevents the aggregation of denatured proteins in cells under severe stress, on which the ATP levels decrease markedly. Inhibits HSPA8/HSC70 ATPase and chaperone activities. The chain is Heat shock protein 105 kDa (Hsph1) from Rattus norvegicus (Rat).